The sequence spans 114 residues: Flagellar hook-basal body complex protein FliE (114 aa).

Belongs to the FliE family.

It is found in the bacterial flagellum basal body. The polypeptide is Flagellar hook-basal body complex protein FliE (Burkholderia vietnamiensis (strain G4 / LMG 22486) (Burkholderia cepacia (strain R1808))).